A 603-amino-acid polypeptide reads, in one-letter code: Elongation factor 4 (603 aa).

The 183-residue stretch at 7–189 (VRIRNFCIIA…AVVERIPPPP (183 aa)) folds into the tr-type G domain. GTP-binding positions include 19–24 (DHGKST) and 136–139 (NKID).

The protein belongs to the TRAFAC class translation factor GTPase superfamily. Classic translation factor GTPase family. LepA subfamily.

The protein localises to the cell inner membrane. It catalyses the reaction GTP + H2O = GDP + phosphate + H(+). In terms of biological role, required for accurate and efficient protein synthesis under certain stress conditions. May act as a fidelity factor of the translation reaction, by catalyzing a one-codon backward translocation of tRNAs on improperly translocated ribosomes. Back-translocation proceeds from a post-translocation (POST) complex to a pre-translocation (PRE) complex, thus giving elongation factor G a second chance to translocate the tRNAs correctly. Binds to ribosomes in a GTP-dependent manner. This is Elongation factor 4 from Nostoc punctiforme (strain ATCC 29133 / PCC 73102).